Reading from the N-terminus, the 162-residue chain is NADH-quinone oxidoreductase subunit I (162 aa).

4Fe-4S ferredoxin-type domains follow at residues 54–83 and 93–122; these read RRYE…INST and SSYE…ETNI. [4Fe-4S] cluster is bound by residues Cys63, Cys66, Cys69, Cys73, Cys102, Cys105, Cys108, and Cys112.

This sequence belongs to the complex I 23 kDa subunit family. NDH-1 is composed of 14 different subunits. Subunits NuoA, H, J, K, L, M, N constitute the membrane sector of the complex. It depends on [4Fe-4S] cluster as a cofactor.

It localises to the cell inner membrane. It catalyses the reaction a quinone + NADH + 5 H(+)(in) = a quinol + NAD(+) + 4 H(+)(out). In terms of biological role, NDH-1 shuttles electrons from NADH, via FMN and iron-sulfur (Fe-S) centers, to quinones in the respiratory chain. The immediate electron acceptor for the enzyme in this species is believed to be ubiquinone. Couples the redox reaction to proton translocation (for every two electrons transferred, four hydrogen ions are translocated across the cytoplasmic membrane), and thus conserves the redox energy in a proton gradient. This chain is NADH-quinone oxidoreductase subunit I, found in Francisella philomiragia subsp. philomiragia (strain ATCC 25017 / CCUG 19701 / FSC 153 / O#319-036).